The following is a 131-amino-acid chain: Profilin-A (131 aa).

This sequence belongs to the profilin family. Occurs in many kinds of cells as a complex with monomeric actin in a 1:1 ratio.

The protein localises to the cytoplasm. The protein resides in the cytoskeleton. In terms of biological role, binds to actin and affects the structure of the cytoskeleton. At high concentrations, profilin prevents the polymerization of actin, whereas it enhances it at low concentrations. By binding to PIP2, it inhibits the formation of IP3 and DG. May serve as a modulator in pollen germination and pollen tube growth. This is Profilin-A from Oryza sativa subsp. japonica (Rice).